Reading from the N-terminus, the 362-residue chain is Transcription factor bHLH133 (362 aa).

The 50-residue stretch at 209–258 folds into the bHLH domain; that stretch reads LQVPSSQSTLKVRKEKLGGRIASLHQLVSPFGKTDTASVLSEAIGYIRFL.

This sequence belongs to the bHLH protein family. In terms of assembly, homodimer.

The protein resides in the nucleus. The sequence is that of Transcription factor bHLH133 (BHLH133) from Arabidopsis thaliana (Mouse-ear cress).